We begin with the raw amino-acid sequence, 417 residues long: D-amino acid dehydrogenase (417 aa).

3–17 (AVVLGSGVVGLMSAW) is a binding site for FAD.

Belongs to the DadA oxidoreductase family. FAD serves as cofactor.

The catalysed reaction is a D-alpha-amino acid + A + H2O = a 2-oxocarboxylate + AH2 + NH4(+). In terms of biological role, oxidative deamination of D-amino acids. This is D-amino acid dehydrogenase from Vibrio vulnificus (strain YJ016).